Here is a 277-residue protein sequence, read N- to C-terminus: Phosphatidylglycerol--prolipoprotein diacylglyceryl transferase (277 aa).

4 helical membrane passes run 18–38 (IAIY…YFMA), 54–74 (DLLV…YVIF), 91–111 (EGGI…IVFA), and 115–135 (GLSF…GQAI). Residue Arg-137 coordinates a 1,2-diacyl-sn-glycero-3-phospho-(1'-sn-glycerol). Helical transmembrane passes span 177–197 (QPTF…LLLL), 205–225 (GELF…IEGM), and 236–256 (LRTA…LWVY).

The protein belongs to the Lgt family.

The protein resides in the cell membrane. The catalysed reaction is L-cysteinyl-[prolipoprotein] + a 1,2-diacyl-sn-glycero-3-phospho-(1'-sn-glycerol) = an S-1,2-diacyl-sn-glyceryl-L-cysteinyl-[prolipoprotein] + sn-glycerol 1-phosphate + H(+). Its pathway is protein modification; lipoprotein biosynthesis (diacylglyceryl transfer). Its function is as follows. Catalyzes the transfer of the diacylglyceryl group from phosphatidylglycerol to the sulfhydryl group of the N-terminal cysteine of a prolipoprotein, the first step in the formation of mature lipoproteins. The chain is Phosphatidylglycerol--prolipoprotein diacylglyceryl transferase from Shouchella clausii (strain KSM-K16) (Alkalihalobacillus clausii).